A 602-amino-acid chain; its full sequence is Adenylosuccinate synthetase (602 aa).

GTP contacts are provided by residues 74-80 and 104-106; these read GDEGKGK and GHT. Asp75 acts as the Proton acceptor in catalysis. Mg(2+)-binding residues include Asp75 and Gly104. Residues 75-78, 102-105, Thr189, Lys203, Gln315, Thr331, and Lys459 contribute to the IMP site; these read DEGK and NAGH. Residue His105 is the Proton donor of the active site. 455 to 461 is a substrate binding site; sequence AVTKKPR. GTP contacts are provided by residues Arg461 and 589 to 591; that span reads GNG.

This sequence belongs to the adenylosuccinate synthetase family. Homodimer. Mg(2+) serves as cofactor.

Its subcellular location is the cytoplasm. The enzyme catalyses IMP + L-aspartate + GTP = N(6)-(1,2-dicarboxyethyl)-AMP + GDP + phosphate + 2 H(+). Its pathway is purine metabolism; AMP biosynthesis via de novo pathway; AMP from IMP: step 1/2. Plays an important role in the salvage pathway for purine nucleotide biosynthesis. Catalyzes the first committed step in the biosynthesis of AMP from IMP. The polypeptide is Adenylosuccinate synthetase (Trypanosoma brucei brucei (strain 927/4 GUTat10.1)).